Consider the following 706-residue polypeptide: SPX domain-containing membrane protein Os09g0521800 (706 aa).

The 144-residue stretch at 2 to 145 folds into the SPX domain; the sequence is VNFSNKLTKD…GYKFTDYYVR (144 aa). 6 helical membrane passes run 251-271, 281-301, 318-338, 340-359, 378-398, and 414-434; these read MSLVLNLANTFLYMVNTYIVV, LGAAATACGAVIGSMAVAQVF, LLFSSVVLLLGNVMYAMAFDL, SLTILLLGRVLCGMGSARAV, AAFVSASALGMACGPALAGLL, and LPGWIMAFGWLVYLIWLWILF. A disordered region spans residues 475 to 498; that stretch reads SEQDEEDDNGDEEHNETLSSSTTT. Residues 476 to 488 show a composition bias toward acidic residues; that stretch reads EQDEEDDNGDEEH. A run of 5 helical transmembrane segments spans residues 520 to 540, 554 to 574, 583 to 603, 611 to 631, and 678 to 698; these read LLIYFMLKYAMEILLAESSVV, VFLAVLGLSVLPVNAIVGTYI, ILVASEMALLAGVMLSFKLTV, VCSAVLTFVSAEVVEGVNLSL, and LLNATLLPALLVCVASIAATL.

This sequence belongs to the major facilitator superfamily.

It is found in the membrane. This Oryza sativa subsp. japonica (Rice) protein is SPX domain-containing membrane protein Os09g0521800.